The following is a 353-amino-acid chain: MTIAVGRVTKEENDLFDIMDDWLRRDRFVFVGWSGLLLFPCAYFALGGWFTGTTFVTSWYTHGLASSYLEGCNFLTAAVSTPANSLAHSLLLLWGPEAQGDFTRWCQLGGLWTFVALHGAFALIGFMLRQFELARSVQLRPYNAISFSGPIAVFVSVFLIYPLGQSGWFFAPSFGVAAIFRFILFFQGFHNWTLNPFHMMGVAGVLGAALLCAIHGATVENTLFEDGDGANTFRAFNPTQAEETYSMVTANRFWSQIFGVAFSNKRWLHFFMLFVPVTGLWMSAIGVVGLALNLRAYDFVSQEIRAAEDPEFETFYTKNILLNEGIRAWMAAQDQPHENLIFPEEVLPRGNAL.

At Thr-2 the chain carries N-acetylthreonine. At Thr-2 the chain carries Phosphothreonine. A helical membrane pass occupies residues 41-61; sequence CAYFALGGWFTGTTFVTSWYT. His-118 contributes to the chlorophyll a binding site. The chain crosses the membrane as a helical span at residues 125-141; it reads GFMLRQFELARSVQLRP. Gln-130 and Asn-143 together coordinate pheophytin a. The chain crosses the membrane as a helical span at residues 153–166; that stretch reads VFVSVFLIYPLGQS. His-198 contributes to the chlorophyll a binding site. A helical membrane pass occupies residues 208 to 228; it reads AALLCAIHGATVENTLFEDGD. Positions 215 and 262 each coordinate a plastoquinone. His-215 is a Fe cation binding site. His-269 contributes to the Fe cation binding site. Residues 279 to 295 traverse the membrane as a helical segment; that stretch reads GLWMSAIGVVGLALNLR.

Belongs to the reaction center PufL/M/PsbA/D family. As to quaternary structure, PSII is composed of 1 copy each of membrane proteins PsbA, PsbB, PsbC, PsbD, PsbE, PsbF, PsbH, PsbI, PsbJ, PsbK, PsbL, PsbM, PsbT, PsbX, PsbY, PsbZ, Psb30/Ycf12, at least 3 peripheral proteins of the oxygen-evolving complex and a large number of cofactors. It forms dimeric complexes. The cofactor is The D1/D2 heterodimer binds P680, chlorophylls that are the primary electron donor of PSII, and subsequent electron acceptors. It shares a non-heme iron and each subunit binds pheophytin, quinone, additional chlorophylls, carotenoids and lipids. There is also a Cl(-1) ion associated with D1 and D2, which is required for oxygen evolution. The PSII complex binds additional chlorophylls, carotenoids and specific lipids..

The protein resides in the plastid. Its subcellular location is the chloroplast thylakoid membrane. The enzyme catalyses 2 a plastoquinone + 4 hnu + 2 H2O = 2 a plastoquinol + O2. Photosystem II (PSII) is a light-driven water:plastoquinone oxidoreductase that uses light energy to abstract electrons from H(2)O, generating O(2) and a proton gradient subsequently used for ATP formation. It consists of a core antenna complex that captures photons, and an electron transfer chain that converts photonic excitation into a charge separation. The D1/D2 (PsbA/PsbD) reaction center heterodimer binds P680, the primary electron donor of PSII as well as several subsequent electron acceptors. D2 is needed for assembly of a stable PSII complex. The polypeptide is Photosystem II D2 protein (Saccharum hybrid (Sugarcane)).